Reading from the N-terminus, the 394-residue chain is Methylthioribose kinase (394 aa).

Residues Asn-44, Lys-61, and 115-117 (EDL) each bind ATP. Substrate is bound at residue Asp-233. 250–252 (DPE) lines the ATP pocket. Arg-337 is a binding site for substrate.

This sequence belongs to the methylthioribose kinase family. In terms of assembly, homodimer.

It catalyses the reaction 5-(methylsulfanyl)-D-ribose + ATP = 5-(methylsulfanyl)-alpha-D-ribose 1-phosphate + ADP + H(+). Its pathway is amino-acid biosynthesis; L-methionine biosynthesis via salvage pathway; S-methyl-5-thio-alpha-D-ribose 1-phosphate from S-methyl-5'-thioadenosine (hydrolase route): step 2/2. Its function is as follows. Catalyzes the phosphorylation of methylthioribose into methylthioribose-1-phosphate. This Bacillus velezensis (strain DSM 23117 / BGSC 10A6 / LMG 26770 / FZB42) (Bacillus amyloliquefaciens subsp. plantarum) protein is Methylthioribose kinase.